Here is a 155-residue protein sequence, read N- to C-terminus: Endoribonuclease YbeY (155 aa).

Positions 114, 118, and 124 each coordinate Zn(2+).

The protein belongs to the endoribonuclease YbeY family. The cofactor is Zn(2+).

The protein resides in the cytoplasm. Single strand-specific metallo-endoribonuclease involved in late-stage 70S ribosome quality control and in maturation of the 3' terminus of the 16S rRNA. The sequence is that of Endoribonuclease YbeY from Escherichia coli O157:H7.